The chain runs to 204 residues: MGVLGGDAHVPIGSQVSPGSVVVTNNESFGHRKLLKGVDFLVRIKAFAFCLAVIVLLKNNVQTTVIAPGIVLQAKYNNTKAPVSLLVLASICCGYAFLQAVVSLLSFIRDKRVLNNTVLAWLTFLLDQVLTYLLLGSAAATAEAAYIAKRGEDKVQWKAVCGPFKRFCDHFAATVFLSFIAVIAFAVSAAISAYYLFRRSKGFK.

The Cytoplasmic segment spans residues 1–36 (MGVLGGDAHVPIGSQVSPGSVVVTNNESFGHRKLLK). A helical transmembrane segment spans residues 37–57 (GVDFLVRIKAFAFCLAVIVLL). Topologically, residues 58 to 84 (KNNVQTTVIAPGIVLQAKYNNTKAPVS) are extracellular. N-linked (GlcNAc...) asparagine glycosylation occurs at Asn-77. A helical membrane pass occupies residues 85–105 (LLVLASICCGYAFLQAVVSLL). Residues 106-117 (SFIRDKRVLNNT) are Cytoplasmic-facing. The helical transmembrane segment at 118 to 138 (VLAWLTFLLDQVLTYLLLGSA) threads the bilayer. Topologically, residues 139-170 (AATAEAAYIAKRGEDKVQWKAVCGPFKRFCDH) are extracellular. Residues 171–191 (FAATVFLSFIAVIAFAVSAAI) traverse the membrane as a helical segment. Residues 192-204 (SAYYLFRRSKGFK) lie on the Cytoplasmic side of the membrane.

The protein belongs to the Casparian strip membrane proteins (CASP) family. In terms of assembly, homodimer and heterodimers.

The protein localises to the cell membrane. This chain is CASP-like protein 2U1, found in Selaginella moellendorffii (Spikemoss).